Reading from the N-terminus, the 523-residue chain is Ribonuclease Y (523 aa).

Residues 28-48 (TYYIVATIIIAVIAVYVDYYI) form a helical membrane-spanning segment. Positions 227 to 312 (TVYVVNLPND…EMVEKAKKEV (86 aa)) constitute a KH domain. The 94-residue stretch at 353-446 (VLKHSIEVSY…VQAADAISAA (94 aa)) folds into the HD domain.

The protein belongs to the RNase Y family.

It localises to the cell membrane. Functionally, endoribonuclease that initiates mRNA decay. The protein is Ribonuclease Y of Clostridium tetani (strain Massachusetts / E88).